The chain runs to 719 residues: Putative ankyrin repeat protein RBE_0319 (719 aa).

ANK repeat units follow at residues 377-406 (VAEELLFTATYYQNINIIKQIIETKIEISS), 408-438 (TLIKALYINFTSDNKEILDYLLSFKGLNINE), 442-472 (NGGTLLDYAITFNKLDIVKKLLSHENIEVNK), 476-506 (YGFTILEQAINDDKLEIVKLLLSCKSLEINQ), 510-540 (YQTTPLQQAINGDKLEIVKLLLSHPDIKFNE), 544-572 (LGYTSLDWVIICNKLEIFKVLMPHLDINQ), 576-605 (DGYTPLEWSIYNSYEVFQTLLLRPDINVNE), 609-639 (HGLTPLQLAIIDHNDQMIQALLSHKNIEVSE), and 642-672 (QYGTPLELVINNSNDTALKLLLSHPKINLNK).

The sequence is that of Putative ankyrin repeat protein RBE_0319 from Rickettsia bellii (strain RML369-C).